The primary structure comprises 428 residues: uncharacterized protein (428 aa).

Disordered stretches follow at residues 1–25 (MRDN…PTRT), 157–219 (DTAK…TEQV), and 247–271 (DFGT…PWRP). Residues 12–22 (GSESQQTTYDP) show a composition bias toward polar residues. Basic and acidic residues predominate over residues 157–171 (DTAKSNEKLQGDESK). Residues 172 to 186 (SSNGSSSTSTTTQRG) show a composition bias toward low complexity. Residues 206–217 (GSQGNSGEQGTE) are compositionally biased toward polar residues.

Belongs to the adhesin P1 family.

This is an uncharacterized protein from Mycoplasma pneumoniae (strain ATCC 29342 / M129 / Subtype 1) (Mycoplasmoides pneumoniae).